The primary structure comprises 141 residues: MSISSKFQLRSSTSLLLLVALMVVMGMDGAAAAPNTNFVSSACNTQKIPSGNPFFTNLRAMLADLKQNTAFSGFDYKTSRAGSGGAPTAYGRAICKSSISQSDCSACLSNLVGRIWGICSNAIGARVQLTDCFIQYEQHSF.

The signal sequence occupies residues 1 to 32 (MSISSKFQLRSSTSLLLLVALMVVMGMDGAAA). The Gnk2-homologous domain maps to 36–141 (TNFVSSACNT…CFIQYEQHSF (106 aa)). 3 disulfide bridges follow: cysteine 43/cysteine 119, cysteine 95/cysteine 104, and cysteine 107/cysteine 132. Asparagine 44 provides a ligand contact to alpha-D-mannopyranose. Arginine 126 and glutamate 137 together coordinate alpha-D-mannopyranose.

Its function is as follows. Exerts antifungal activity through its carbohydrate-binding specificity. The protein is Antifungal protein ginkbilobin-like protein 1 of Picea glauca (White spruce).